Reading from the N-terminus, the 562-residue chain is Sulfite reductase [NADPH] hemoprotein beta-component (562 aa).

4 residues coordinate [4Fe-4S] cluster: Cys-425, Cys-431, Cys-470, and Cys-474. Residue Cys-474 participates in siroheme binding.

The protein belongs to the nitrite and sulfite reductase 4Fe-4S domain family. As to quaternary structure, alpha(8)-beta(8). The alpha component is a flavoprotein, the beta component is a hemoprotein. Requires siroheme as cofactor. The cofactor is [4Fe-4S] cluster.

It catalyses the reaction hydrogen sulfide + 3 NADP(+) + 3 H2O = sulfite + 3 NADPH + 4 H(+). It participates in sulfur metabolism; hydrogen sulfide biosynthesis; hydrogen sulfide from sulfite (NADPH route): step 1/1. Functionally, component of the sulfite reductase complex that catalyzes the 6-electron reduction of sulfite to sulfide. This is one of several activities required for the biosynthesis of L-cysteine from sulfate. This is Sulfite reductase [NADPH] hemoprotein beta-component from Tolumonas auensis (strain DSM 9187 / NBRC 110442 / TA 4).